The chain runs to 205 residues: Large ribosomal subunit protein uL10 (205 aa).

Residues 167 to 205 (AQGAAPAEAKAEAPASEEKAADTPAEQPAESAPEAAPEA) are disordered. Composition is skewed to low complexity over residues 169–180 (GAAPAEAKAEAP) and 190–205 (PAEQ…APEA).

This sequence belongs to the universal ribosomal protein uL10 family. As to quaternary structure, part of the ribosomal stalk of the 50S ribosomal subunit. The N-terminus interacts with L11 and the large rRNA to form the base of the stalk. The C-terminus forms an elongated spine to which L12 dimers bind in a sequential fashion forming a multimeric L10(L12)X complex.

Forms part of the ribosomal stalk, playing a central role in the interaction of the ribosome with GTP-bound translation factors. This Treponema denticola (strain ATCC 35405 / DSM 14222 / CIP 103919 / JCM 8153 / KCTC 15104) protein is Large ribosomal subunit protein uL10.